The chain runs to 286 residues: Protein NipSnap homolog 2 (286 aa).

Residues 1 to 40 (MATRVLHSSCSGLYRAAGPARGKGHATAVIRSLSASHNRP) constitute a mitochondrion transit peptide.

It belongs to the NipSnap family.

It is found in the mitochondrion matrix. In terms of biological role, protein involved in mitophagy. Accumulates on the mitochondria surface in response to mitochondrial depolarization and acts as a 'eat me' signal by recruiting proteins involved in selective autophagy. This is Protein NipSnap homolog 2 (nipsnap2) from Danio rerio (Zebrafish).